Consider the following 783-residue polypeptide: ATP-dependent 6-phosphofructokinase (783 aa).

Residues 1 to 10 (MAPPQAPVQP) show a composition bias toward pro residues. A disordered region spans residues 1 to 20 (MAPPQAPVQPPKRRRIGVLT). An N-terminal catalytic PFK domain 1 region spans residues 1–389 (MAPPQAPVQP…YHFSYINTST (389 aa)). Residues Gly-23, 86 to 87 (RC), and 116 to 119 (GDGS) contribute to the ATP site. Residue Asp-117 participates in Mg(2+) binding. Residues 162–164 (SID), Arg-199, 206–208 (MGR), Glu-263, Arg-291, and 297–300 (HTQR) each bind substrate. The active-site Proton acceptor is the Asp-164. The tract at residues 390–403 (PDHPKLLLPENKRM) is interdomain linker. Residues 404–783 (RIGIIHVGAP…NATWSCYENA (380 aa)) form a C-terminal regulatory PFK domain 2 region. Residues Arg-480, 537–541 (TISNN), Arg-575, 582–584 (QGG), Glu-642, Arg-668, 674–677 (HFQQ), and Arg-749 contribute to the beta-D-fructose 2,6-bisphosphate site.

Belongs to the phosphofructokinase type A (PFKA) family. ATP-dependent PFK group I subfamily. Eukaryotic two domain clade 'E' sub-subfamily. In terms of assembly, homotetramer. Mg(2+) is required as a cofactor.

It is found in the cytoplasm. The enzyme catalyses beta-D-fructose 6-phosphate + ATP = beta-D-fructose 1,6-bisphosphate + ADP + H(+). It functions in the pathway carbohydrate degradation; glycolysis; D-glyceraldehyde 3-phosphate and glycerone phosphate from D-glucose: step 3/4. Allosterically activated by ADP, AMP, or fructose 2,6-bisphosphate, and allosterically inhibited by ATP or citrate. In terms of biological role, catalyzes the phosphorylation of D-fructose 6-phosphate to fructose 1,6-bisphosphate by ATP, the first committing step of glycolysis. In Aspergillus niger, this protein is ATP-dependent 6-phosphofructokinase (pfkA).